The primary structure comprises 208 residues: 3-demethoxyubiquinol 3-hydroxylase (208 aa).

Fe cation contacts are provided by Glu-57, Glu-87, His-90, Glu-139, Glu-171, and His-174.

Belongs to the COQ7 family. It depends on Fe cation as a cofactor.

The protein resides in the cell membrane. The enzyme catalyses a 5-methoxy-2-methyl-3-(all-trans-polyprenyl)benzene-1,4-diol + AH2 + O2 = a 3-demethylubiquinol + A + H2O. The protein operates within cofactor biosynthesis; ubiquinone biosynthesis. Functionally, catalyzes the hydroxylation of 2-nonaprenyl-3-methyl-6-methoxy-1,4-benzoquinol during ubiquinone biosynthesis. The chain is 3-demethoxyubiquinol 3-hydroxylase from Nitrosomonas eutropha (strain DSM 101675 / C91 / Nm57).